Reading from the N-terminus, the 467-residue chain is Protection of telomeres protein 1a (467 aa).

This sequence belongs to the telombin family. Component of the telomerase holoenzyme complex at least composed of TERT, CBF5 and POT1a. The RNA molecule associated to the telomerase complex, and providing a template for telomeric DNA synthesis, is most likely TR and not TER1 as described previously. Interacts with the N-terminal part of TERT. Interacts with CBF5. Interacts with CTC1 and STN1. Does not interact with TEN1. Expressed in roots, rosette leaves, cauline leaves, stems and flowers.

The protein resides in the nucleus. Its subcellular location is the chromosome. It is found in the telomere. The protein localises to the nucleolus. It localises to the cytoplasm. In terms of biological role, component of the telomerase ribonucleoprotein (RNP) complex that is essential for the positive regulation of telomere length. Binds RNA non-specifically. Binds specifically single-stranded telomeric DNA. Not required to recruit telomerase to telomeres, but stimulates TER1 RNP repeat addition processivity. The protein is Protection of telomeres protein 1a of Arabidopsis thaliana (Mouse-ear cress).